Here is a 545-residue protein sequence, read N- to C-terminus: Cleavage and polyadenylation specificity factor subunit 6 (545 aa).

The interval 37-69 (ISPSANNGDAPEDRDYLDSLPAPGGNEGSKGAP) is disordered. An RRM domain is found at 81 to 161 (IALYIGNLTW…QNPIVTPCNK (81 aa)). Positions 165–180 (SQFEMQSRKSTQSGQM) are enriched in polar residues. 2 disordered regions span residues 165–404 (SQFE…PLSE) and 478–545 (YGSV…YRHR). Residues 184–200 (GKAGPPGSGSRGGGFPP) are compositionally biased toward gly residues. Composition is skewed to pro residues over residues 220–230 (PVGPGGPPPHF), 237–265 (PRLPSGPPGPLGPPGPPPPGQGLPPPLGG), 287–363 (PMGP…PPGN), and 372–383 (GPPPGDPYGRPP). Basic and acidic residues-rich tracts occupy residues 384 to 397 (PYDRDFPGGRDMDA) and 483 to 497 (GRRERSRERDHSRSR). Residues 498–508 (EKSRRHKSRSR) are compositionally biased toward basic residues. Basic and acidic residues predominate over residues 509-545 (DRHEDYYRERSRERDRHRERDRDRERDREREREYRHR).

The protein belongs to the RRM CPSF6/7 family. In terms of assembly, component of the cleavage factor Im (CFIm) complex.

It localises to the nucleus. Its subcellular location is the nucleoplasm. The protein localises to the nucleus speckle. It is found in the cytoplasm. Component of the cleavage factor Im (CFIm) complex that functions as an activator of the pre-mRNA 3'-end cleavage and polyadenylation processing required for the maturation of pre-mRNA into functional mRNAs. CFIm contributes to the recruitment of multiprotein complexes on specific sequences on the pre-mRNA 3'-end, so called cleavage and polyadenylation signals (pA signals). Most pre-mRNAs contain multiple pA signals, resulting in alternative cleavage and polyadenylation (APA) producing mRNAs with variable 3'-end formation. The CFIm complex acts as a key regulator of cleavage and polyadenylation site choice during APA through its binding to 5'-UGUA-3' elements localized in the 3'-untranslated region (UTR) for a huge number of pre-mRNAs. Plays a role in mRNA export. The sequence is that of Cleavage and polyadenylation specificity factor subunit 6 from Danio rerio (Zebrafish).